A 254-amino-acid chain; its full sequence is MARNIQSLERAAAMLRLLAGGERRLGLSDIASTLGLAKGTAHGILRSLQAEGFVEQEPASGRYQLGAELLALGNSYLDVHELRARALVWTDDLARSSGEAAYLGVLHQQGVLIVHHVFRPDDSRQVLEVGAMHPLHSTAHGKVISAFDPVAHSEVLEGDRATLTGRTVTEAAAFEEVLDLTRARGWALDLEETWEGVASLAAPVHDRRRMAVGAVGVTGPVERLCPDGAPATELVTAVRDCAAAVSRDLGAGRF.

The region spanning 5 to 67 is the HTH iclR-type domain; that stretch reads IQSLERAAAM…PASGRYQLGA (63 aa). Residues 27–46 constitute a DNA-binding region (H-T-H motif); it reads LSDIASTLGLAKGTAHGILR. The IclR-ED domain occupies 82-251; it reads LRARALVWTD…AAAVSRDLGA (170 aa).

In terms of biological role, may be an activator protein for the gylABX operon. The polypeptide is Glycerol operon regulatory protein (gylR) (Streptomyces griseus).